An 81-amino-acid polypeptide reads, in one-letter code: Large ribosomal subunit protein bL31 (81 aa).

Belongs to the bacterial ribosomal protein bL31 family. Type A subfamily. As to quaternary structure, part of the 50S ribosomal subunit.

Its function is as follows. Binds the 23S rRNA. The chain is Large ribosomal subunit protein bL31 from Synechocystis sp. (strain ATCC 27184 / PCC 6803 / Kazusa).